We begin with the raw amino-acid sequence, 379 residues long: Succinyl-diaminopimelate desuccinylase (379 aa).

His-70 lines the Zn(2+) pocket. Asp-72 is a catalytic residue. Residue Asp-103 coordinates Zn(2+). The active-site Proton acceptor is the Glu-137. 3 residues coordinate Zn(2+): Glu-138, Glu-166, and His-352.

The protein belongs to the peptidase M20A family. DapE subfamily. Homodimer. Zn(2+) is required as a cofactor. Co(2+) serves as cofactor.

It catalyses the reaction N-succinyl-(2S,6S)-2,6-diaminopimelate + H2O = (2S,6S)-2,6-diaminopimelate + succinate. It participates in amino-acid biosynthesis; L-lysine biosynthesis via DAP pathway; LL-2,6-diaminopimelate from (S)-tetrahydrodipicolinate (succinylase route): step 3/3. Functionally, catalyzes the hydrolysis of N-succinyl-L,L-diaminopimelic acid (SDAP), forming succinate and LL-2,6-diaminopimelate (DAP), an intermediate involved in the bacterial biosynthesis of lysine and meso-diaminopimelic acid, an essential component of bacterial cell walls. In Burkholderia vietnamiensis (strain G4 / LMG 22486) (Burkholderia cepacia (strain R1808)), this protein is Succinyl-diaminopimelate desuccinylase.